A 142-amino-acid polypeptide reads, in one-letter code: Succinate dehydrogenase subunit 6, mitochondrial (142 aa).

At Gly2 the chain carries N-acetylglycine.

In terms of assembly, component of complex II composed of eight subunits in plants: four classical SDH subunits SDH1, SDH2, SDH3 and SDH4 (a flavoprotein (FP), an iron-sulfur protein (IP), and a cytochrome b composed of a large and a small subunit.), as well as four subunits unknown in mitochondria from bacteria and heterotrophic eukaryotes.

The protein resides in the mitochondrion inner membrane. It functions in the pathway carbohydrate metabolism; tricarboxylic acid cycle. This is Succinate dehydrogenase subunit 6, mitochondrial from Arabidopsis thaliana (Mouse-ear cress).